We begin with the raw amino-acid sequence, 148 residues long: UPF0134 protein MPN_204 (148 aa).

This sequence belongs to the UPF0134 family.

This chain is UPF0134 protein MPN_204, found in Mycoplasma pneumoniae (strain ATCC 29342 / M129 / Subtype 1) (Mycoplasmoides pneumoniae).